The primary structure comprises 171 residues: S-ribosylhomocysteine lyase (171 aa).

Fe cation is bound by residues His54, His58, and Cys128.

Belongs to the LuxS family. As to quaternary structure, homodimer. It depends on Fe cation as a cofactor.

It catalyses the reaction S-(5-deoxy-D-ribos-5-yl)-L-homocysteine = (S)-4,5-dihydroxypentane-2,3-dione + L-homocysteine. Its function is as follows. Involved in the synthesis of autoinducer 2 (AI-2) which is secreted by bacteria and is used to communicate both the cell density and the metabolic potential of the environment. The regulation of gene expression in response to changes in cell density is called quorum sensing. Catalyzes the transformation of S-ribosylhomocysteine (RHC) to homocysteine (HC) and 4,5-dihydroxy-2,3-pentadione (DPD). This is S-ribosylhomocysteine lyase from Yersinia enterocolitica serotype O:8 / biotype 1B (strain NCTC 13174 / 8081).